Reading from the N-terminus, the 299-residue chain is Taste receptor type 2 member 42 (299 aa).

At 1–7 the chain is on the extracellular side; sequence MATELDK. A helical transmembrane segment spans residues 8-28; it reads IFLILAIAEFIISMLGNVFIG. At 29-50 the chain is on the cytoplasmic side; it reads LVNCSEGIKNQKVFSSDFILTS. Residues 51–71 form a helical membrane-spanning segment; sequence LAISTIGQLLVILFDSFLVGL. The Extracellular segment spans residues 72-101; that stretch reads ASHLYTTYRLGKPVIMLWHMTNHLTTWLAT. A helical membrane pass occupies residues 102 to 122; sequence CLSVFYFFKIAHFPHSLFLWL. The Cytoplasmic portion of the chain corresponds to 123–127; sequence RWRMN. Residues 128 to 148 form a helical membrane-spanning segment; the sequence is GMIAMLLILSLFLLIFDSSVL. At 149 to 187 the chain is on the extracellular side; that stretch reads EIFIDISLNIIDKSSLTLYLDESKTLYDKLSILKTLLSL. The chain crosses the membrane as a helical span at residues 188-208; it reads TSFIPFSLSLTSVLFLYLSLV. Topologically, residues 209 to 238 are cytoplasmic; sequence RHTRNLKLSSLGSRDSSTEAHRRAMKMVMS. Residues 239–259 form a helical membrane-spanning segment; the sequence is FLFLFIVHFFSLQVANWIFFM. Residues 260–265 are Extracellular-facing; that stretch reads LWNNKY. The chain crosses the membrane as a helical span at residues 266 to 286; the sequence is IKFVMLALNAFPSCHSFILIL. Over 287-299 the chain is Cytoplasmic; the sequence is GNSKLRQTAVRLL.

This sequence belongs to the G-protein coupled receptor T2R family.

The protein localises to the membrane. Functionally, receptor that may play a role in the perception of bitterness and is gustducin-linked. May play a role in sensing the chemical composition of the gastrointestinal content. The activity of this receptor may stimulate alpha gustducin, mediate PLC-beta-2 activation and lead to the gating of TRPM5. This chain is Taste receptor type 2 member 42 (TAS2R42), found in Gorilla gorilla gorilla (Western lowland gorilla).